The sequence spans 473 residues: Photosystem II CP43 reaction center protein (473 aa).

A propeptide spanning residues 1 to 14 (MKTLYSLRRFYPVE) is cleaved from the precursor. Threonine 15 carries the post-translational modification N-acetylthreonine. Threonine 15 is modified (phosphothreonine). The next 5 helical transmembrane spans lie at 69-93 (LFEVAHFVPEKPMYEQGLILLPHLA), 134-155 (LLGPETLEESFPFFGYVWKDRN), 178-200 (KALYFGGVYDTWAPGGGDVRKIT), 255-275 (KPFAWARRALVWSGEAYLSYS), and 291-312 (WFNNTAYPSEFYGPTGPEASQA). Glutamate 367 lines the [CaMn4O5] cluster pocket. A helical membrane pass occupies residues 447-471 (RARAAAAGFEKGIDRDFEPVLSMTP).

This sequence belongs to the PsbB/PsbC family. PsbC subfamily. PSII is composed of 1 copy each of membrane proteins PsbA, PsbB, PsbC, PsbD, PsbE, PsbF, PsbH, PsbI, PsbJ, PsbK, PsbL, PsbM, PsbT, PsbX, PsbY, PsbZ, Psb30/Ycf12, at least 3 peripheral proteins of the oxygen-evolving complex and a large number of cofactors. It forms dimeric complexes. Binds multiple chlorophylls and provides some of the ligands for the Ca-4Mn-5O cluster of the oxygen-evolving complex. It may also provide a ligand for a Cl- that is required for oxygen evolution. PSII binds additional chlorophylls, carotenoids and specific lipids. serves as cofactor.

It is found in the plastid. The protein resides in the chloroplast thylakoid membrane. Functionally, one of the components of the core complex of photosystem II (PSII). It binds chlorophyll and helps catalyze the primary light-induced photochemical processes of PSII. PSII is a light-driven water:plastoquinone oxidoreductase, using light energy to abstract electrons from H(2)O, generating O(2) and a proton gradient subsequently used for ATP formation. The chain is Photosystem II CP43 reaction center protein from Populus trichocarpa (Western balsam poplar).